Reading from the N-terminus, the 439-residue chain is MSLANVVVIGAQWGDEGKGKITDLLSRSADVVVRYQGGVNAGHTIVVDDKVLKLHLIPSGILYPETICLIGSGTVIDPKVMLKELDMLLENSIDISGLQLASTAHVTMPYHRLLDEAMEQQRGDQRIGTTGRGIGPTYADKSQRNGIRVLDLLDSQRLRERLRGPLQEKNRLLEQIYGVAPLDSEQVIEEYLGYGQRLAPHVVDCIQTIHQAARSRKNILFEGAQGTLLDLDHGTYPYVTSSNPISGGACIGAGVGPTLIDRVIGVAKAYTTRVGEGPFPTELEGSINEQLCDRGGEFGTTTGRRRRCGWFDGVIGRYAVAVNGLDCLAITKLDVLDELDEIRVCVAYELNGERIEHFPSSAEDFARCHPIFETLPGWQCTTADCRRLEDLPTTAMDYLRFLADLMEVPIAIVSLGANRDQTIVVEDPIHGPKRALLSA.

GTP contacts are provided by residues 14–20 and 42–44; these read GDEGKGK and GHT. The active-site Proton acceptor is the Asp15. Asp15 and Gly42 together coordinate Mg(2+). IMP contacts are provided by residues 15–18, 40–43, Thr130, Arg144, Gln225, Thr240, and Arg304; these read DEGK and NAGH. Residue His43 is the Proton donor of the active site. 300 to 306 lines the substrate pocket; that stretch reads TTTGRRR. Residues Arg306, 332–334, and 414–416 contribute to the GTP site; these read KLD and SLG.

The protein belongs to the adenylosuccinate synthetase family. Homodimer. Requires Mg(2+) as cofactor.

Its subcellular location is the cytoplasm. The enzyme catalyses IMP + L-aspartate + GTP = N(6)-(1,2-dicarboxyethyl)-AMP + GDP + phosphate + 2 H(+). It participates in purine metabolism; AMP biosynthesis via de novo pathway; AMP from IMP: step 1/2. Its function is as follows. Plays an important role in the de novo pathway of purine nucleotide biosynthesis. Catalyzes the first committed step in the biosynthesis of AMP from IMP. In Prochlorococcus marinus (strain MIT 9303), this protein is Adenylosuccinate synthetase.